The chain runs to 272 residues: Type III pantothenate kinase (272 aa).

An ATP-binding site is contributed by 6 to 13 (DVRNTHTV). Residue 109 to 112 (GADR) participates in substrate binding. Residue D111 is the Proton acceptor of the active site. D131 contributes to the K(+) binding site. ATP is bound at residue S134. T186 lines the substrate pocket.

It belongs to the type III pantothenate kinase family. In terms of assembly, homodimer. The cofactor is NH4(+). Requires K(+) as cofactor.

The protein localises to the cytoplasm. The enzyme catalyses (R)-pantothenate + ATP = (R)-4'-phosphopantothenate + ADP + H(+). It participates in cofactor biosynthesis; coenzyme A biosynthesis; CoA from (R)-pantothenate: step 1/5. Its function is as follows. Catalyzes the phosphorylation of pantothenate (Pan), the first step in CoA biosynthesis. This chain is Type III pantothenate kinase, found in Mycobacterium marinum (strain ATCC BAA-535 / M).